A 729-amino-acid polypeptide reads, in one-letter code: MESLPRTPTKGRSTQHLSTPSPKNDILAMNGHKRRNTTTPPPKHTLLKPQRTDIHRHSLASQSRISMSPNRELLKNYKGTANLIYGNQKSNSGVTSFYKENVNELNRTQAILFEKKATLDLLKDELTETKEKINAVNLKFETLREEKIKIEQQLNLKNNELISIKEEFLSKKQFMNEGHEIHLKQLAASNKKELKQMENEYKTKIEKLKFMKIKQFENERASLLDKIEEVRNKITMNPSTLQEMLNDVEQKHMLEKEEWLTEYQSQWKKDIELNNKHMQEIESIKKEIENTLKPELAEKKKLLTEKRNAYEAIKVKVKEKEEETTRLRDEVALKQKTNLETLEKIKELEEYIKDTELGMKELNEILIKEETVRRTLHNELQELRGNIRVYCRIRPALKNLENSDTSLINVNEFDDNSGVQSMEVTKIQNTAQVHEFKFDKIFDQQDTNVDVFKEVGQLVQSSLDGYNVCIFAYGQTGSGKTFTMLNPGDGIIPSTISHIFNWINKLKTKGWDYKVNCEFIEIYNENIVDLLRSDNNNKEDTSIGLKHEIRHDQETKTTTITNVTSCKLESEEMVEIILKKANKLRSTASTASNEHSSRSHSIFIIHLSGSNAKTGAHSYGTLNLVDLAGSERINVSQVVGDRLRETQNINKSLSCLGDVIHALGQPDSTKRHIPFRNSKLTYLLQYSLTGDSKTLMFVNISPSSSHINETLNSLRFASKVNSTRLVSRK.

The tract at residues 1–48 is disordered; it reads MESLPRTPTKGRSTQHLSTPSPKNDILAMNGHKRRNTTTPPPKHTLLK. Positions 1–109 are globular; sequence MESLPRTPTK…ENVNELNRTQ (109 aa). The segment covering 10 to 22 has biased composition (polar residues); sequence KGRSTQHLSTPSP. Residues 110–357 adopt a coiled-coil conformation; that stretch reads AILFEKKATL…LEEYIKDTEL (248 aa). Residues Asn386, Arg388, Arg392, Glu454, Gly477, Ser478, Gly479, Lys480, Thr481, Phe482, Glu554, Lys579, and Thr694 each coordinate ATP. Positions 386-723 constitute a Kinesin motor domain; sequence NIRVYCRIRP…LRFASKVNST (338 aa).

Belongs to the TRAFAC class myosin-kinesin ATPase superfamily. Kinesin family. NCD subfamily. Interacts with CIK1; the interaction is direct. Interacts with VIK1; the interaction is direct.

It is found in the cytoplasm. The protein resides in the cytoskeleton. The protein localises to the microtubule organizing center. Its subcellular location is the spindle pole body. It localises to the nucleus. It is found in the chromosome. The protein resides in the spindle. The catalysed reaction is ATP + H2O = ADP + phosphate + H(+). It carries out the reaction ATP + H2O + a kinesin associated with a microtubule at position (n) = ADP + phosphate + a kinesin associated with a microtubule at position (n-1, toward the minus end).. Functionally, minus end-directed microtubule (MT) motor involved in spindle midzone assembly, poleward transport of newly captured kinetochores along the lateral side of MTs, karyogamy (nuclear fusion) during mating, and with an essential function in meiosis I. Functions together with the accessory proteins CIK1 or VIK1. Drives the poleward transport of newly captured kinetochores along the lateral side of MTs, both during S-phase and during M-phase. To contribute to spindle midzone assembly during mitotic metaphase, the nuclear KAR3-CIK1 motor cross-links anti-parallel microtubules to align them on the spindle axis; as the motor travels polewards splayed microtubules are pulled into alignment. During the karyogamy (nuclear fusion) step of mating, KAR3-CIK1 cross-links antiparallel cytoplasmic microtubules emanating from the spindle pole bodies of mating partners; the motor activity of KAR3 creates the force that pulls the nuclei together by sliding cross-linked microtubules past one another. KAR3-CIK1 promotes microtubule shortening predominantly from the microtubule plus-end. Together with cytoplasmic VIK1, may act to stabilize microtubules. Requires accessory protein VIK1 for spindle pole body localization and to allow the CIN8 and KIP1 motors to generate outwardly directed spindle forces. Essential during meiosis I. The ATPase activity is stimulated by microtubule-binding. In Saccharomyces cerevisiae (strain ATCC 204508 / S288c) (Baker's yeast), this protein is Kinesin-like protein KAR3 (KAR3).